The sequence spans 364 residues: Glutamine synthetase (364 aa).

Positions 15 to 94 (VLAEYIWIDA…VLAECWNNDG (80 aa)) constitute a GS beta-grasp domain. Residues 101-364 (HRHECAKLMS…ETKRGEEEGF (264 aa)) enclose the GS catalytic domain.

It belongs to the glutamine synthetase family. Homooctamer.

It is found in the cytoplasm. The enzyme catalyses L-glutamate + NH4(+) + ATP = L-glutamine + ADP + phosphate + H(+). In Yarrowia lipolytica (strain CLIB 122 / E 150) (Yeast), this protein is Glutamine synthetase (GLN1).